Here is a 194-residue protein sequence, read N- to C-terminus: Protein GrpE (194 aa).

Composition is skewed to basic and acidic residues over residues 1-19 and 26-44; these read MSKE…ENTS and KKEA…NQKL. A disordered region spans residues 1-44; it reads MSKEEFPSEKNLDKEENTSKPKKAVKKEAAKGEETKKNNENQKL.

Belongs to the GrpE family. Homodimer.

It is found in the cytoplasm. Functionally, participates actively in the response to hyperosmotic and heat shock by preventing the aggregation of stress-denatured proteins, in association with DnaK and GrpE. It is the nucleotide exchange factor for DnaK and may function as a thermosensor. Unfolded proteins bind initially to DnaJ; upon interaction with the DnaJ-bound protein, DnaK hydrolyzes its bound ATP, resulting in the formation of a stable complex. GrpE releases ADP from DnaK; ATP binding to DnaK triggers the release of the substrate protein, thus completing the reaction cycle. Several rounds of ATP-dependent interactions between DnaJ, DnaK and GrpE are required for fully efficient folding. The sequence is that of Protein GrpE from Lactobacillus acidophilus (strain ATCC 700396 / NCK56 / N2 / NCFM).